The chain runs to 258 residues: Alpha-fibrinogenase (258 aa).

The first 18 residues, 1–18 (MVLIRVLANLVMLHLSYG), serve as a signal peptide directing secretion. A propeptide spanning residues 19–24 (EKSSEL) is cleaved from the precursor. The Peptidase S1 domain occupies 25-249 (VIGGRPCNIN…YNDWIQSIIA (225 aa)). 6 cysteine pairs are disulfide-bonded: Cys31-Cys163, Cys50-Cys66, Cys98-Cys256, Cys142-Cys210, Cys174-Cys189, and Cys200-Cys225. Asn44 carries an N-linked (GlcNAc...) asparagine glycan. Residue His65 is the Charge relay system of the active site. N-linked (GlcNAc...) asparagine glycosylation is found at Asn79 and Asn101. The active-site Charge relay system is Asp110. Ser204 acts as the Charge relay system in catalysis.

Belongs to the peptidase S1 family. Snake venom subfamily. Monomer. Post-translationally, glycosylated. Contains 8.5% of hexoses, 5.8% of hexosamines and 0.8% of sialic acids. As to expression, expressed by the venom gland.

The protein resides in the secreted. With respect to regulation, inhibited by diisopropylfluorophosphate (DFP) and PMSF, and partially by soybean trypsin inhibitor, but not by EDTA. Its function is as follows. Degrades alpha chain of fibrinogen (FGA), and has strong caseinolytic activity. Cleaves oxidized insulin B-chain at '40-Tyr-|-Leu-41', '48-Phe-|-Phe-49' and '49-Phe-|-Tyr-50', and glucagon at the bonds '62-Tyr-|-Ser-63', 66-Leu-|-Asp-67' and '78-Leu-|-Met-79' bonds. The chain is Alpha-fibrinogenase from Macrovipera lebetinus (Levantine viper).